Here is a 405-residue protein sequence, read N- to C-terminus: Phosphopentomutase (405 aa).

Mn(2+) is bound by residues aspartate 10, aspartate 303, histidine 308, aspartate 344, histidine 345, and histidine 356.

This sequence belongs to the phosphopentomutase family. Requires Mn(2+) as cofactor.

It is found in the cytoplasm. The catalysed reaction is 2-deoxy-alpha-D-ribose 1-phosphate = 2-deoxy-D-ribose 5-phosphate. It carries out the reaction alpha-D-ribose 1-phosphate = D-ribose 5-phosphate. The protein operates within carbohydrate degradation; 2-deoxy-D-ribose 1-phosphate degradation; D-glyceraldehyde 3-phosphate and acetaldehyde from 2-deoxy-alpha-D-ribose 1-phosphate: step 1/2. Isomerase that catalyzes the conversion of deoxy-ribose 1-phosphate (dRib-1-P) and ribose 1-phosphate (Rib-1-P) to deoxy-ribose 5-phosphate (dRib-5-P) and ribose 5-phosphate (Rib-5-P), respectively. This is Phosphopentomutase from Shewanella loihica (strain ATCC BAA-1088 / PV-4).